Consider the following 158-residue polypeptide: Ribosome maturation factor RimP (158 aa).

This sequence belongs to the RimP family.

The protein resides in the cytoplasm. In terms of biological role, required for maturation of 30S ribosomal subunits. In Streptococcus suis (strain 98HAH33), this protein is Ribosome maturation factor RimP.